We begin with the raw amino-acid sequence, 715 residues long: Putative pentatricopeptide repeat-containing protein At3g23330 (715 aa).

13 PPR repeats span residues 38 to 68 (SHTS…LKSP), 69 to 103 (PVLA…GRCP), 104 to 138 (DHNV…GMDC), 139 to 172 (DLYT…MPQR), 206 to 240 (DVVS…DLKP), 241 to 275 (DSFT…GIDS), 276 to 306 (DVYI…LYCR), 307 to 341 (DGIS…KVKP), 342 to 376 (GAVA…GFGS), 377 to 407 (NIFI…MNVL), 408 to 442 (DEVS…GVKP), 443 to 473 (NQVA…MTKV), and 479 to 509 (ELEH…MCVE). Residues 514-589 (VWSTLLSSCS…KPACSWIEMK (76 aa)) are type E motif. The interval 590-620 (NKTHGFVSGDRSHPSMDKINEFLKAVMEQME) is type E(+) motif. Positions 621–715 (KEGYVADTSG…RGNCSCGDYW (95 aa)) are type DYW motif.

Belongs to the PPR family. PCMP-H subfamily.

The sequence is that of Putative pentatricopeptide repeat-containing protein At3g23330 (PCMP-H32) from Arabidopsis thaliana (Mouse-ear cress).